A 339-amino-acid chain; its full sequence is Glyceraldehyde-3-phosphate dehydrogenase (339 aa).

Residues 11 to 12 and Gly110 contribute to the NAD(+) site; that span reads TI. Position 139-141 (139-141) interacts with D-glyceraldehyde 3-phosphate; it reads SCN. Cys140 functions as the Nucleophile in the catalytic mechanism. Arg168 is a binding site for NAD(+). Residue 194 to 195 participates in D-glyceraldehyde 3-phosphate binding; that stretch reads HG. Position 301 (Gln301) interacts with NAD(+).

The protein belongs to the glyceraldehyde-3-phosphate dehydrogenase family. Homotetramer.

It localises to the cytoplasm. It carries out the reaction D-glyceraldehyde 3-phosphate + phosphate + NADP(+) = (2R)-3-phospho-glyceroyl phosphate + NADPH + H(+). The enzyme catalyses D-glyceraldehyde 3-phosphate + phosphate + NAD(+) = (2R)-3-phospho-glyceroyl phosphate + NADH + H(+). The protein operates within carbohydrate degradation; glycolysis; pyruvate from D-glyceraldehyde 3-phosphate: step 1/5. The chain is Glyceraldehyde-3-phosphate dehydrogenase from Methanospirillum hungatei JF-1 (strain ATCC 27890 / DSM 864 / NBRC 100397 / JF-1).